The chain runs to 68 residues: U-reduvitoxin-Pr3a (68 aa).

The signal sequence occupies residues 1–22 (MKAGMKLVLVLVIASIALLALA). Intrachain disulfides connect Cys29-Cys47, Cys36-Cys52, and Cys46-Cys59.

It belongs to the venom Ptu1-like knottin family. In terms of tissue distribution, expressed by the venom gland.

The protein resides in the secreted. Functionally, binds reversibly and blocks P/Q-type voltage-gated calcium channels (Cav). In Platymeris rhadamanthus (Red spot assassin bug), this protein is U-reduvitoxin-Pr3a.